We begin with the raw amino-acid sequence, 2005 residues long: Sodium channel protein type 2 subunit alpha (2005 aa).

At 1–129 (MAQSVLVPPG…KLAIKILVHS (129 aa)) the chain is on the cytoplasmic side. Ser-4 bears the Phosphoserine mark. Positions 28–61 (RIAEEKAKRPKQERKDEDDENGPKPNSDLEAGKS) are disordered. A Glycyl lysine isopeptide (Lys-Gly) (interchain with G-Cter in SUMO1) cross-link involves residue Lys-38. The stretch at 111–456 (ILTPFNPIRK…QQMLEQLKKQ (346 aa)) is one I repeat. A helical transmembrane segment spans residues 130-148 (LFNMLIMCTILTNCVFMTM). Topologically, residues 149–155 (SNPPDWT) are extracellular. Residues 156-176 (KNVEYTFTGIYTFESLIKILA) form a helical membrane-spanning segment. At 177-190 (RGFCLEDFTFLRDP) the chain is on the cytoplasmic side. The chain crosses the membrane as a helical span at residues 191-208 (WNWLDFTVITFAYVTEFV). The Extracellular portion of the chain corresponds to 209–214 (DLGNVS). A glycan (N-linked (GlcNAc...) asparagine) is linked at Asn-212. A helical transmembrane segment spans residues 215–231 (ALRTFRVLRALKTISVI). The Cytoplasmic portion of the chain corresponds to 232–250 (PGLKTIVGALIQSVKKLSD). A helical transmembrane segment spans residues 251–270 (VMILTVFCLSVFALIGLQLF). Over 271 to 369 (MGNLRNKCLQ…PNYGYTSFDT (99 aa)) the chain is Extracellular. Residues Cys-278 and Cys-338 are joined by a disulfide bond. Asn-285, Asn-291, Asn-297, Asn-303, Asn-308, and Asn-340 each carry an N-linked (GlcNAc...) asparagine glycan. An intramembrane region (pore-forming) is located at residues 370–394 (FSWAFLSLFRLMTQDFWENLYQLTL). The Extracellular portion of the chain corresponds to 395 to 401 (RAAGKTY). Residues 402-422 (MIFFVLVIFLGSFYLINLILA) traverse the membrane as a helical segment. Over 423-759 (VVAMAYEEQN…HLVNLVVMDP (337 aa)) the chain is Cytoplasmic. Residues Ser-468, Ser-471, Ser-484, Ser-526, Ser-528, Ser-531, Ser-553, Ser-554, Ser-558, Ser-573, Ser-576, Ser-589, Ser-610, Ser-623, Ser-686, Ser-687, and Ser-721 each carry the phosphoserine modification. The segment at 494 to 529 (SSKSEKELKNRRKKKKQKEQSGEEEKNDRVRKSESE) is disordered. Positions 511–529 (KEQSGEEEKNDRVRKSESE) are enriched in basic and acidic residues. The tract at residues 590–610 (ENDFADDEHSTFEDNDSRRDS) is disordered. The span at 596–610 (DEHSTFEDNDSRRDS) shows a compositional bias: basic and acidic residues. The II repeat unit spans residues 741 to 1013 (CCKPWLKVKH…QIAVGRMQKG (273 aa)). The chain crosses the membrane as a helical span at residues 760–778 (FVDLAITICIVLNTLFMAM). The Extracellular segment spans residues 779 to 789 (EHYPMTEQFSS). The chain crosses the membrane as a helical span at residues 790–809 (VLSVGNLVFTGIFTAEMFLK). The Cytoplasmic segment spans residues 810–823 (IIAMDPYYYFQEGW). A helical membrane pass occupies residues 824-843 (NIFDGFIVSLSLMELGLANV). At 844–845 (EG) the chain is on the extracellular side. A helical membrane pass occupies residues 846–863 (LSVLRSFRLLRVFKLAKS). The Cytoplasmic segment spans residues 864 to 879 (WPTLNMLIKIIGNSVG). Residues 880–898 (ALGNLTLVLAIIVFIFAVV) form a helical membrane-spanning segment. The Extracellular portion of the chain corresponds to 899–927 (GMQLFGKSYKECVCKISNDCELPRWHMHD). An intrachain disulfide couples Cys-912 to Cys-918. The interval 917 to 918 (DC) is binds SCN2B. Residues 928-948 (FFHSFLIVFRVLCGEWIETMW) constitute an intramembrane region (pore-forming). The Extracellular portion of the chain corresponds to 949–961 (DCMEVAGQTMCLT). The cysteines at positions 950 and 959 are disulfide-linked. Residues 962–982 (VFMMVMVIGNLVVLNLFLALL) form a helical membrane-spanning segment. Residues 983–1209 (LSSFSSDNLA…TCYKIVEHNW (227 aa)) lie on the Cytoplasmic side of the membrane. A disordered region spans residues 1120–1165 (EEFSSESDMEESKEKLNATSSSEGSTVDIGAPAEGEQPEVEPEESL). Positions 1155–1165 (EQPEVEPEESL) are enriched in acidic residues. An III repeat occupies 1190–1504 (KGKLWWNLRK…KKYYNAMKKL (315 aa)). A helical membrane pass occupies residues 1210–1227 (FETFIVFMILLSSGALAF). The Extracellular segment spans residues 1228 to 1240 (EDIYIEQRKTIKT). A helical membrane pass occupies residues 1241 to 1259 (MLEYADKVFTYIFILEMLL). Residues 1260-1273 (KWVAYGFQVYFTNA) are Cytoplasmic-facing. The helical transmembrane segment at 1274–1292 (WCWLDFLIVDVSLVSLTAN) threads the bilayer. Topologically, residues 1293–1300 (ALGYSELG) are extracellular. The helical transmembrane segment at 1301–1319 (AIKSLRTLRALRPLRALSR) threads the bilayer. Topologically, residues 1320–1336 (FEGMRVVVNALLGAIPS) are cytoplasmic. Residues 1337 to 1356 (IMNVLLVCLIFWLIFSIMGV) traverse the membrane as a helical segment. Topologically, residues 1357–1408 (NLFAGKFYHCINYTTGEMFDVSVVNNYSECKALIESNQTARWKNVKVNFDNV) are extracellular. The cysteines at positions 1366 and 1386 are disulfide-linked. N-linked (GlcNAc...) asparagine glycans are attached at residues Asn-1368, Asn-1382, and Asn-1393. Residues 1409–1430 (GLGYLSLLQVATFKGWMDIMYA) constitute an intramembrane region (pore-forming). Topologically, residues 1431–1447 (AVDSRNVELQPKYEDNL) are extracellular. The helical transmembrane segment at 1448-1469 (YMYLYFVIFIIFGSFFTLNLFI) threads the bilayer. Residues 1470–1532 (GVIIDNFNQQ…MVFDFVTKQV (63 aa)) lie on the Cytoplasmic side of the membrane. Phosphoserine; by PKC is present on Ser-1506. Residues 1513–1811 (IPRPANKFQG…WEKFDPDATQ (299 aa)) form an IV repeat. Residues 1533-1550 (FDISIMILICLNMVTMMV) form a helical membrane-spanning segment. Topologically, residues 1551-1561 (ETDDQSQEMTN) are extracellular. The helical transmembrane segment at 1562-1580 (ILYWINLVFIVLFTGECVL) threads the bilayer. Residues 1581–1592 (KLISLRYYYFTI) lie on the Cytoplasmic side of the membrane. The chain crosses the membrane as a helical span at residues 1593 to 1610 (GWNIFDFVVVILSIVGMF). Residues 1611–1623 (LAELIEKYFVSPT) lie on the Extracellular side of the membrane. A helical transmembrane segment spans residues 1624–1640 (LFRVIRLARIGRILRLI). Over 1641 to 1659 (KGAKGIRTLLFALMMSLPA) the chain is Cytoplasmic. The chain crosses the membrane as a helical span at residues 1660-1677 (LFNIGLLLFLVMFIYAIF). Residues 1678–1699 (GMSNFAYVKREVGIDDMFNFET) are Extracellular-facing. An intramembrane region (pore-forming) is located at residues 1700-1722 (FGNSMICLFQITTSAGWDGLLAP). Residues 1723–1752 (ILNSGPPDCDPDKDHPGSSVKGDCGNPSVG) are Extracellular-facing. A disulfide bridge connects residues Cys-1731 and Cys-1746. The helical transmembrane segment at 1753 to 1775 (IFFFVSYIIISFLVVVNMYIAVI) threads the bilayer. Residues 1776–2005 (LENFSVATEE…KGKDIRESKK (230 aa)) are Cytoplasmic-facing. The 30-residue stretch at 1905 to 1934 (EEVSAIIIQRAYRRYLLKQKVKKVSSIYKK) folds into the IQ domain. The residue at position 1930 (Ser-1930) is a Phosphoserine. Positions 1935 to 1964 (DKGKECDGTPIKEDTLIDKLNENSTPEKTD) are enriched in basic and acidic residues. The interval 1935–2005 (DKGKECDGTP…KGKDIRESKK (71 aa)) is disordered. Phosphothreonine occurs at positions 1943, 1963, and 1966. At Ser-1971 the chain carries Phosphoserine. Basic and acidic residues predominate over residues 1979–2005 (TKPEKEKFEKDKSEKEDKGKDIRESKK).

It belongs to the sodium channel (TC 1.A.1.10) family. Nav1.2/SCN2A subfamily. As to quaternary structure, heterooligomer of a large alpha subunit and a smaller beta subunit. Heterooligomer with SCN2B or SCN4B; disulfide-linked. Heterooligomer with SCN1B or SCN3B; non-covalently linked. Interacts with NEDD4L. Interacts with CALM. Interacts with TMEM233. Interacts with the conotoxin GVIIJ. Interacts with the spider beta/delta-theraphotoxin-Pre1a. Interacts with the conotoxin KIIIA. Interacts with the spider protoxin-II. Post-translationally, may be ubiquitinated by NEDD4L; which would promote its endocytosis. In terms of processing, phosphorylation at Ser-1506 by PKC in a highly conserved cytoplasmic loop slows inactivation of the sodium channel and reduces peak sodium currents. Sumoylated at Lys-38. Sumoylation is induced by hypoxia, increases voltage-gated sodium current and mediates the early response to acute hypoxia in neurons. Sumoylated SCN2A is located at the cell membrane.

It is found in the cell membrane. It catalyses the reaction Na(+)(in) = Na(+)(out). In terms of biological role, mediates the voltage-dependent sodium ion permeability of excitable membranes. Assuming opened or closed conformations in response to the voltage difference across the membrane, the protein forms a sodium-selective channel through which Na(+) ions may pass in accordance with their electrochemical gradient. Implicated in the regulation of hippocampal replay occurring within sharp wave ripples (SPW-R) important for memory. This chain is Sodium channel protein type 2 subunit alpha, found in Homo sapiens (Human).